The chain runs to 313 residues: Olfactory receptor 4M2 (313 aa).

Over 1 to 25 (METANYTKVTEFVLTGLSQTPEVQL) the chain is Cytoplasmic. The helical transmembrane segment at 26–46 (VLFVIFLSFYLFILPGNILII) threads the bilayer. Residues 47-57 (CTISLDPHLTS) are Extracellular-facing. The chain crosses the membrane as a helical span at residues 58–78 (PMYFLLANLAFLDIWYSSITA). Topologically, residues 79–97 (PEMLIDFFVERKIISFDEC) are cytoplasmic. Cys97 and Cys179 form a disulfide bridge. Residues 98–118 (IAQLFFLHFAGASEMFLLTVM) traverse the membrane as a helical segment. The Extracellular portion of the chain corresponds to 119–142 (AFDLYTAICRPLHYATIMNQRLCC). Residues 143 to 163 (ILVALSWRGGFIHSIIQVALI) form a helical membrane-spanning segment. Residues 164-204 (VRLPFCGPNELDSYFCDITQVVRIACANTFPEELVMICSSG) are Cytoplasmic-facing. The chain crosses the membrane as a helical span at residues 205–225 (LISVVCLIALLMSYAFLLALL). The Extracellular segment spans residues 226–238 (KKLSGSGENTNRA). Residues 239–259 (VSTCYSHITIVVLMFGPSIYI) traverse the membrane as a helical segment. Over 260–270 (YARPFDSFSLD) the chain is Cytoplasmic. The chain crosses the membrane as a helical span at residues 271–291 (KVVSVFNTLIFPLHNPIIYTL). Residues 292 to 313 (RNKEVKAAMRKLVTKYILCKEK) lie on the Extracellular side of the membrane.

This sequence belongs to the G-protein coupled receptor 1 family.

Its subcellular location is the membrane. Functionally, odorant receptor. The chain is Olfactory receptor 4M2 from Homo sapiens (Human).